The sequence spans 399 residues: Fructose-bisphosphate aldolase 1, chloroplastic (399 aa).

The transit peptide at 1 to 48 (MASSTATMLKASPVKSDWVKGQSLLLRQPSSVSAIRSHVAPSALTVRA) directs the protein to the chloroplast. Substrate is bound at residue Arg-96. Residue Ser-158 is modified to Phosphoserine. Lys-186 provides a ligand contact to substrate. At Ser-216 the chain carries Phosphoserine. Glu-226 functions as the Proton acceptor in the catalytic mechanism. Lys-268 functions as the Schiff-base intermediate with dihydroxyacetone-P in the catalytic mechanism. 310-312 (SGG) serves as a coordination point for substrate. N6,N6,N6-trimethyllysine is present on Lys-395.

The protein belongs to the class I fructose-bisphosphate aldolase family. Homotetramer. Post-translationally, can be trimethylated at Lys-395 by LSMT-L, but the trimethylation has no effect in vitro on the kinetic properties of the enzyme. S-glutathionylated. In terms of tissue distribution, highly expressed in rosettes leaves and cauline leaves.

It localises to the plastid. The protein localises to the chloroplast. Its subcellular location is the plastoglobule. The protein resides in the chloroplast stroma. The enzyme catalyses beta-D-fructose 1,6-bisphosphate = D-glyceraldehyde 3-phosphate + dihydroxyacetone phosphate. It functions in the pathway carbohydrate degradation; glycolysis; D-glyceraldehyde 3-phosphate and glycerone phosphate from D-glucose: step 4/4. Functionally, plays a key role in glycolysis and gluconeogenesis. In Arabidopsis thaliana (Mouse-ear cress), this protein is Fructose-bisphosphate aldolase 1, chloroplastic.